A 221-amino-acid chain; its full sequence is Ribonuclease T (221 aa).

In terms of domain architecture, Exonuclease spans 20-194 (VVIDIETAGF…YDTLQTANLF (175 aa)). Mg(2+) is bound by residues aspartate 23, glutamate 25, histidine 181, and aspartate 186. The active-site Proton donor/acceptor is the histidine 181.

It belongs to the RNase T family. As to quaternary structure, homodimer. Mg(2+) is required as a cofactor.

Its function is as follows. Trims short 3' overhangs of a variety of RNA species, leaving a one or two nucleotide 3' overhang. Responsible for the end-turnover of tRNA: specifically removes the terminal AMP residue from uncharged tRNA (tRNA-C-C-A). Also appears to be involved in tRNA biosynthesis. The sequence is that of Ribonuclease T from Buchnera aphidicola subsp. Acyrthosiphon pisum (strain APS) (Acyrthosiphon pisum symbiotic bacterium).